The chain runs to 254 residues: Lipid uptake coordinator A (254 aa).

The next 4 helical transmembrane spans lie at 5–25 (VAVL…FYFV), 44–64 (LRIA…FTLL), 85–105 (IMAH…EVWL), and 114–134 (LFGI…GFYL). The segment at 143–254 (PPPKPLKPKK…SGVQVAKVDE (112 aa)) is disordered. The segment covering 148–163 (LKPKKPKQRRLRRKKT) has biased composition (basic residues). Positions 169–191 (AEPEAAEEAENTELAAQEDEEAV) are enriched in acidic residues. Residues 192-220 (EAPPESIESPGGEPESATREAPAAETATA) are compositionally biased toward low complexity. Positions 227–244 (LRNRRPTGKTSHRRRRTR) are enriched in basic residues.

Interacts with the Mce1 and Mce4 accessory subunits Rv0199/OmamA, Rv0177/Mam1C and Rv3492c/Mam4B.

Its subcellular location is the cell membrane. Its function is as follows. Required for the import of both fatty acids and cholesterol during growth in macrophages and in axenic culture. Facilitates the uptake of these lipids by stabilizing protein subunits of the Mce1 and Mce4 multi-subunit transporters, which transport fatty acids and cholesterol, respectively. Required for full virulence in vivo. The polypeptide is Lipid uptake coordinator A (Mycobacterium tuberculosis (strain ATCC 25618 / H37Rv)).